Consider the following 634-residue polypeptide: 1-deoxy-D-xylulose-5-phosphate synthase (634 aa).

Thiamine diphosphate contacts are provided by residues His74 and 115–117 (AHS). Asp146 is a Mg(2+) binding site. Thiamine diphosphate contacts are provided by residues 147-148 (GA), Asn176, Tyr283, and Glu365. Mg(2+) is bound at residue Asn176.

The protein belongs to the transketolase family. DXPS subfamily. As to quaternary structure, homodimer. Requires Mg(2+) as cofactor. It depends on thiamine diphosphate as a cofactor.

The enzyme catalyses D-glyceraldehyde 3-phosphate + pyruvate + H(+) = 1-deoxy-D-xylulose 5-phosphate + CO2. It participates in metabolic intermediate biosynthesis; 1-deoxy-D-xylulose 5-phosphate biosynthesis; 1-deoxy-D-xylulose 5-phosphate from D-glyceraldehyde 3-phosphate and pyruvate: step 1/1. Its function is as follows. Catalyzes the acyloin condensation reaction between C atoms 2 and 3 of pyruvate and glyceraldehyde 3-phosphate to yield 1-deoxy-D-xylulose-5-phosphate (DXP). In Burkholderia thailandensis (strain ATCC 700388 / DSM 13276 / CCUG 48851 / CIP 106301 / E264), this protein is 1-deoxy-D-xylulose-5-phosphate synthase.